The primary structure comprises 884 residues: uncharacterized protein (884 aa).

This is an uncharacterized protein from Mycobacterium bovis (strain ATCC BAA-935 / AF2122/97).